The primary structure comprises 327 residues: 2-oxoisovalerate dehydrogenase subunit beta (327 aa).

Residues Glu-29, Leu-58 to Glu-60, Gln-82, and Phe-86 to Pro-89 each bind thiamine diphosphate. Substrate is bound by residues Phe-83–Phe-86 and His-129. His-129 functions as the Proton acceptor in the catalytic mechanism.

As to quaternary structure, heterotetramer of two alpha and two beta chains. Directly associated with ODBA in the E1 complex. Thiamine diphosphate is required as a cofactor.

It catalyses the reaction N(6)-[(R)-lipoyl]-L-lysyl-[protein] + 3-methyl-2-oxobutanoate + H(+) = N(6)-[(R)-S(8)-2-methylpropanoyldihydrolipoyl]-L-lysyl-[protein] + CO2. Functionally, the branched-chain alpha-keto dehydrogenase complex catalyzes the overall conversion of alpha-keto acids to acyl-CoA and CO(2). It contains multiple copies of three enzymatic components: branched-chain alpha-keto acid decarboxylase (E1), lipoamide acyltransferase (E2) and lipoamide dehydrogenase (E3). This chain is 2-oxoisovalerate dehydrogenase subunit beta (bfmBAB), found in Bacillus subtilis (strain 168).